The sequence spans 764 residues: 5-methyltetrahydropteroyltriglutamate--homocysteine methyltransferase (764 aa).

5-methyltetrahydropteroyltri-L-glutamate is bound by residues 16–19 (RELK) and Lys117. L-homocysteine is bound by residues 442–444 (IGS) and Glu495. Residues 442–444 (IGS) and Glu495 each bind L-methionine. 5-methyltetrahydropteroyltri-L-glutamate is bound by residues 526-527 (RC) and Trp572. Residue Asp610 coordinates L-homocysteine. Asp610 lines the L-methionine pocket. Glu616 lines the 5-methyltetrahydropteroyltri-L-glutamate pocket. Residues His652, Cys654, and Glu676 each contribute to the Zn(2+) site. His705 acts as the Proton donor in catalysis. A Zn(2+)-binding site is contributed by Cys737.

This sequence belongs to the vitamin-B12 independent methionine synthase family. The cofactor is Zn(2+).

It catalyses the reaction 5-methyltetrahydropteroyltri-L-glutamate + L-homocysteine = tetrahydropteroyltri-L-glutamate + L-methionine. It participates in amino-acid biosynthesis; L-methionine biosynthesis via de novo pathway; L-methionine from L-homocysteine (MetE route): step 1/1. Its function is as follows. Catalyzes the transfer of a methyl group from 5-methyltetrahydrofolate to homocysteine resulting in methionine formation. This chain is 5-methyltetrahydropteroyltriglutamate--homocysteine methyltransferase, found in Bordetella pertussis (strain Tohama I / ATCC BAA-589 / NCTC 13251).